Reading from the N-terminus, the 338-residue chain is UDP-3-O-acylglucosamine N-acyltransferase (338 aa).

The active-site Proton acceptor is the histidine 239.

Belongs to the transferase hexapeptide repeat family. LpxD subfamily. As to quaternary structure, homotrimer.

The enzyme catalyses a UDP-3-O-[(3R)-3-hydroxyacyl]-alpha-D-glucosamine + a (3R)-hydroxyacyl-[ACP] = a UDP-2-N,3-O-bis[(3R)-3-hydroxyacyl]-alpha-D-glucosamine + holo-[ACP] + H(+). Its pathway is bacterial outer membrane biogenesis; LPS lipid A biosynthesis. Its function is as follows. Catalyzes the N-acylation of UDP-3-O-acylglucosamine using 3-hydroxyacyl-ACP as the acyl donor. Is involved in the biosynthesis of lipid A, a phosphorylated glycolipid that anchors the lipopolysaccharide to the outer membrane of the cell. In Thermosynechococcus vestitus (strain NIES-2133 / IAM M-273 / BP-1), this protein is UDP-3-O-acylglucosamine N-acyltransferase.